The following is a 1262-amino-acid chain: Histone-lysine N-methyltransferase eggless (1262 aa).

Residues 1–194 (MSGQPTAVDC…MEVDQDVEES (194 aa)) form a disordered region. Composition is skewed to basic and acidic residues over residues 26–41 (ASRE…KGEN), 50–61 (AAKDVEIEELTH), and 81–99 (APDE…KGEN). Over residues 157–166 (SSISSPTSES) the composition is skewed to low complexity. The span at 167–179 (FPEKDEKTNKENE) shows a compositional bias: basic and acidic residues. Residue Ser215 is modified to Phosphoserine. Residue Thr217 is modified to Phosphothreonine. Residues 353–420 (EKSDFSKNKL…LEKVQTTADK (68 aa)) are a coiled coil. 2 consecutive Tudor domains span residues 529 to 602 (RLTI…SEKV) and 629 to 686 (QCTR…RETQ). The segment at 743-764 (SSAATPAGGRTNAGGVSTSNSA) is disordered. The 67-residue stretch at 818–884 (LDSYSPLAKP…DNFDFTPDLK (67 aa)) folds into the MBD domain. The region spanning 946–1018 (LCCDCEDDCS…NCLNRVVQFS (73 aa)) is the Pre-SET domain. Zn(2+) is bound by residues Cys948, Cys950, Cys954, Cys960, Cys962, Cys1000, Cys1004, Cys1006, and Cys1010. The 217-residue stretch at 1021-1237 (MKLQVFKTSN…SGTELTWNYN (217 aa)) folds into the SET domain. S-adenosyl-L-methionine contacts are provided by residues 1031–1033 (RGW), Asp1069, and Tyr1071. Basic and acidic residues predominate over residues 1086 to 1097 (EGYESEVDHSDP). A disordered region spans residues 1086–1148 (EGYESEVDHS…QSSELDSQER (63 aa)). Residues 1098–1113 (DAEEDNGGPDAEDDDD) are compositionally biased toward acidic residues. The segment covering 1129–1141 (RSGSTQNSSTQSS) has biased composition (low complexity). S-adenosyl-L-methionine-binding positions include Arg1191 and 1194 to 1195 (NH). 4 residues coordinate Zn(2+): Cys1197, Cys1250, Cys1252, and Cys1257. The region spanning 1246 to 1262 (KVLYCQCGAPNCRLRLL) is the Post-SET domain.

The protein belongs to the class V-like SAM-binding methyltransferase superfamily. Histone-lysine methyltransferase family. Suvar3-9 subfamily. In terms of tissue distribution, expressed in ovary (at protein level).

The protein localises to the nucleus. It is found in the chromosome. It carries out the reaction L-lysyl(9)-[histone H3] + 3 S-adenosyl-L-methionine = N(6),N(6),N(6)-trimethyl-L-lysyl(9)-[histone H3] + 3 S-adenosyl-L-homocysteine + 3 H(+). In terms of biological role, histone methyltransferase that specifically trimethylates 'Lys-10' of histone H3 (H3K9me3) in ovary. H3K9me3 represents a specific tag for epigenetic transcriptional repression by recruiting Su(var)205/HP1 to methylated histones. Plays a central role during oogenesis. The chain is Histone-lysine N-methyltransferase eggless (egg) from Drosophila melanogaster (Fruit fly).